We begin with the raw amino-acid sequence, 26 residues long: Aldehyde dehydrogenase beta chain (26 aa).

Heterotrimer composed of an alpha, a beta and a gamma chain. The cofactor is FAD.

The enzyme catalyses an aldehyde + a quinone + H2O = a quinol + a carboxylate + H(+). The chain is Aldehyde dehydrogenase beta chain from Amycolatopsis methanolica.